The primary structure comprises 248 residues: Uridylate kinase (248 aa).

ATP is bound at residue 13–16; that stretch reads KLSG. Gly55 lines the UMP pocket. ATP-binding residues include Gly56 and Arg60. UMP is bound by residues Asp75 and 136–143; that span reads TGNPYFTT. The ATP site is built by Thr163, Tyr169, and Asp172.

This sequence belongs to the UMP kinase family. In terms of assembly, homohexamer.

Its subcellular location is the cytoplasm. The enzyme catalyses UMP + ATP = UDP + ADP. Its pathway is pyrimidine metabolism; CTP biosynthesis via de novo pathway; UDP from UMP (UMPK route): step 1/1. Its activity is regulated as follows. Inhibited by UTP. In terms of biological role, catalyzes the reversible phosphorylation of UMP to UDP. This Leptospira interrogans serogroup Icterohaemorrhagiae serovar copenhageni (strain Fiocruz L1-130) protein is Uridylate kinase.